A 232-amino-acid polypeptide reads, in one-letter code: Adenosylcobinamide-GDP ribazoletransferase (232 aa).

7 consecutive transmembrane segments (helical) span residues 24-44, 46-66, 96-116, 117-137, 153-173, 174-194, and 210-230; these read LWAF…ILYL, IPLA…LLHL, IAGV…LSML, PFYA…LGLA, GMNG…YLPV, VIYD…WYVI, and GAMA…SLCF.

Belongs to the CobS family. Mg(2+) serves as cofactor.

The protein resides in the cell membrane. The catalysed reaction is alpha-ribazole + adenosylcob(III)inamide-GDP = adenosylcob(III)alamin + GMP + H(+). It carries out the reaction alpha-ribazole 5'-phosphate + adenosylcob(III)inamide-GDP = adenosylcob(III)alamin 5'-phosphate + GMP + H(+). Its pathway is cofactor biosynthesis; adenosylcobalamin biosynthesis; adenosylcobalamin from cob(II)yrinate a,c-diamide: step 7/7. Joins adenosylcobinamide-GDP and alpha-ribazole to generate adenosylcobalamin (Ado-cobalamin). Also synthesizes adenosylcobalamin 5'-phosphate from adenosylcobinamide-GDP and alpha-ribazole 5'-phosphate. The polypeptide is Adenosylcobinamide-GDP ribazoletransferase (Pyrococcus abyssi (strain GE5 / Orsay)).